The sequence spans 367 residues: Polyenoic acids biosynthesis gene cluster protein Ba17b (367 aa).

Transmembrane regions (helical) follow at residues 16 to 36, 50 to 70, and 90 to 110; these read LEVF…LRFY, WLII…IGAV, and LVAF…TEGL. Residue Asn133 is glycosylated (N-linked (GlcNAc...) asparagine). A run of 3 helical transmembrane segments spans residues 137–157, 183–203, and 211–231; these read LVLV…CTPF, FPNI…VWGL, and LVLV…GGDS. Asn245 carries N-linked (GlcNAc...) asparagine glycosylation. Residues 259–279 traverse the membrane as a helical segment; it reads LIIWTVCEPGVYLIAACLLVY.

It belongs to the SAT4 family.

It localises to the membrane. It participates in secondary metabolite biosynthesis. In terms of biological role, part of the gene cluster that mediates the biosynthesis of (2Z,4E,6E,10E)-9-hydroxydodeca-2,4,6,10-tetraenoic acid (BAA), (2E,4E,6E,10E)-9-hydroxydodeca-2,4,6,10-tetraenoic acid (BAB), and (2Z,4E,6E)-octa-2,4,6-trienedioic acid (PBA). The highly reducing polyketide synthase Ba17a is sufficent to produce PBA and BAA. The still to be characterized protein Ba17b leads to an increased production of BAA as well as to the production of the new compound BAB. BAA does not possess insecticidal activity against G.mellonella larvae, however, both BAA and BAB increase the growth of Candida albicans and BAA can mitigate the fungicidal effects of fluconazole over C.albicans, suggesting that generalist pathogens such as M.anisopliae, can potentially manipulate the yeast microbiota found in arthropods (and anywhere else) by the activity of compounds as BAA and BAB. In Metarhizium anisopliae (Entomophthora anisopliae), this protein is Polyenoic acids biosynthesis gene cluster protein Ba17b.